The primary structure comprises 426 residues: DNA polymerase processivity factor component A20 (426 aa).

It belongs to the poxviruses A20 family. Interacts with the DNA polymerase catalytic subunit E9. Interacts with UDG. Component of the Uracil-DNA glycosylase(UDG)-A20-polymerase complex; A20 and UDG form a heterodimeric processivity factor that associates with E9 to form the processive polymerase holoenzyme. Interacts with D5.

In terms of biological role, plays an essential role in viral DNA replication by acting as the polymerase processivity factor together with protein D4. May serve as a bridge which links the DNA polymerase E9 and the uracil DNA glycosylase. This is DNA polymerase processivity factor component A20 from Vaccinia virus (strain Ankara) (VACV).